A 273-amino-acid chain; its full sequence is 4-hydroxy-tetrahydrodipicolinate reductase (273 aa).

NAD(+) is bound by residues 12-17 and E38; that span reads GAGGRM. R39 lines the NADP(+) pocket. NAD(+) contacts are provided by residues 102–104 and 126–129; these read GTT and AANF. The Proton donor/acceptor role is filled by H159. Residue H160 participates in (S)-2,3,4,5-tetrahydrodipicolinate binding. The Proton donor role is filled by K163. Residue 169-170 coordinates (S)-2,3,4,5-tetrahydrodipicolinate; sequence GT.

This sequence belongs to the DapB family. Homotetramer.

The protein resides in the cytoplasm. The enzyme catalyses (S)-2,3,4,5-tetrahydrodipicolinate + NAD(+) + H2O = (2S,4S)-4-hydroxy-2,3,4,5-tetrahydrodipicolinate + NADH + H(+). It carries out the reaction (S)-2,3,4,5-tetrahydrodipicolinate + NADP(+) + H2O = (2S,4S)-4-hydroxy-2,3,4,5-tetrahydrodipicolinate + NADPH + H(+). It participates in amino-acid biosynthesis; L-lysine biosynthesis via DAP pathway; (S)-tetrahydrodipicolinate from L-aspartate: step 4/4. Catalyzes the conversion of 4-hydroxy-tetrahydrodipicolinate (HTPA) to tetrahydrodipicolinate. This Salmonella enteritidis PT4 (strain P125109) protein is 4-hydroxy-tetrahydrodipicolinate reductase.